A 511-amino-acid chain; its full sequence is Bifunctional purine biosynthesis protein PurH (511 aa).

Positions 1–145 (MKKRALVSVS…KNHKFVSVIV (145 aa)) constitute an MGS-like domain.

Belongs to the PurH family.

The catalysed reaction is (6R)-10-formyltetrahydrofolate + 5-amino-1-(5-phospho-beta-D-ribosyl)imidazole-4-carboxamide = 5-formamido-1-(5-phospho-D-ribosyl)imidazole-4-carboxamide + (6S)-5,6,7,8-tetrahydrofolate. The enzyme catalyses IMP + H2O = 5-formamido-1-(5-phospho-D-ribosyl)imidazole-4-carboxamide. The protein operates within purine metabolism; IMP biosynthesis via de novo pathway; 5-formamido-1-(5-phospho-D-ribosyl)imidazole-4-carboxamide from 5-amino-1-(5-phospho-D-ribosyl)imidazole-4-carboxamide (10-formyl THF route): step 1/1. Its pathway is purine metabolism; IMP biosynthesis via de novo pathway; IMP from 5-formamido-1-(5-phospho-D-ribosyl)imidazole-4-carboxamide: step 1/1. The polypeptide is Bifunctional purine biosynthesis protein PurH (Bacillus mycoides (strain KBAB4) (Bacillus weihenstephanensis)).